A 567-amino-acid chain; its full sequence is NADH-ubiquinone oxidoreductase chain 2 (567 aa).

The next 14 membrane-spanning stretches (helical) occupy residues 2 to 22 (LILSLFILIIYSSIINNIDTI), 43 to 63 (IGIIIILYSLYIFKDISLSYI), 85 to 105 (NIFNIYIIFLLLIVIISLLSI), 133 to 153 (LNIYYISIIIFNIIGLILLLT), 158 to 178 (ISIFISIELQSYSLYILTGII), 189 to 209 (LFYYLIGGIGSIIILYGISLL), 236 to 256 (ILIGWLFIIIGLLIKIGAAPM), 274 to 294 (YISLIPKISILSYILLIILNL), 312 to 332 (LIYILSIIIILSLIIGSIGGL), 340 to 360 (ILAYSGLLNIGYFLLIILSLI), 372 to 392 (IIYITQYCFNHISIFILLIIA), 423 to 443 (LIFCLIIIIGSFIGIPPLFGF), 459 to 479 (LFLSLLLIISSIISSIYYLYF), and 530 to 550 (VGNYITYILSSYILIILFNFI).

The protein belongs to the complex I subunit 2 family.

The protein resides in the mitochondrion inner membrane. It catalyses the reaction a ubiquinone + NADH + 5 H(+)(in) = a ubiquinol + NAD(+) + 4 H(+)(out). Core subunit of the mitochondrial membrane respiratory chain NADH dehydrogenase (Complex I) that is believed to belong to the minimal assembly required for catalysis. Complex I functions in the transfer of electrons from NADH to the respiratory chain. The immediate electron acceptor for the enzyme is believed to be ubiquinone. In Wickerhamomyces canadensis (Yeast), this protein is NADH-ubiquinone oxidoreductase chain 2 (ND2).